Reading from the N-terminus, the 1325-residue chain is NHS-like protein 3 (1325 aa).

The stretch at 53–85 (LEDLHTEAQEGLKILQQEEEDTSSKERNESLEN) forms a coiled coil. 10 disordered regions span residues 68-92 (QQEE…SGHS), 111-131 (QGST…KRRS), 291-348 (CSAS…KGKC), 368-570 (MSVS…AKTS), 595-614 (QTNT…TTVK), 829-891 (EVNG…MEES), 935-981 (LLST…VSEF), 1084-1138 (VGED…SSAV), 1243-1272 (GTKK…ENAT), and 1293-1313 (SDQV…EQAS). Low complexity predominate over residues 296 to 334 (ASKGSMASASPSSSRSGSGTNQAPPTTSPSRSNSQSSET). Residues 335–344 (IVSNSSTISS) are compositionally biased toward polar residues. Residues 369 to 378 (SVSSSSSWKS) are compositionally biased toward low complexity. Polar residues predominate over residues 400-412 (VRNSHSFSRSLSV). Positions 428–447 (LHHENMQRQREQGDIQDPKD) are enriched in basic and acidic residues. A compositionally biased stretch (polar residues) spans 450–460 (PNNNEQTNRDI). Residues 515–524 (KTRECGENFD) show a composition bias toward basic and acidic residues. Low complexity predominate over residues 528-541 (SPSSGYSSQSGTPT). Positions 834–850 (SPPPSPPPEHHPPPPPI) are enriched in pro residues. Composition is skewed to polar residues over residues 935-948 (LLST…SSPE) and 1088-1100 (QVNN…TEPT). A compositionally biased stretch (low complexity) spans 1124–1138 (KSNSPAKSSSASSAV). Positions 1302-1311 (RAQSLGNQEQ) are enriched in polar residues.

Able to directly activate the TNF-NFkappaB signaling pathway. This Danio rerio (Zebrafish) protein is NHS-like protein 3 (nhsl3).